We begin with the raw amino-acid sequence, 67 residues long: Andropin (67 aa).

Positions 1–19 (MKYFLVLVVLTLILAISVG) are cleaved as a signal peptide.

This sequence belongs to the andropin family. Ejaculatory duct of adult males.

It is found in the secreted. Functionally, male-specific peptide with moderate activity against Gram-positive bacteria. This Drosophila orena (Fruit fly) protein is Andropin (Anp).